Here is a 220-residue protein sequence, read N- to C-terminus: Inner kinetochore subunit fta3 (220 aa).

Belongs to the CENP-H/MCM16 family. Component of the inner kinetochore constitutive centromere-associated network (CCAN) (also known as central kinetochore Sim4 complex in fission yeast), which is composed of at least cnl2, cnp3, cnp20, fta1, fta2, fta3, fta4, fta6, fta7, mal2, mhf1, mhf2, mis6, mis15, mis17, sim4 and wip1.

Its subcellular location is the nucleus. The protein localises to the chromosome. It localises to the centromere. It is found in the kinetochore. Functionally, component of the kinetochore, a multiprotein complex that assembles on centromeric DNA and attaches chromosomes to spindle microtubules, mediating chromosome segregation and sister chromatid segregation during meiosis and mitosis. Component of the inner kinetochore constitutive centromere-associated network (CCAN), which serves as a structural platform for outer kinetochore assembly. Fta2, fta3 and fta4 associate with the central core (cnt) and inner repeat (inr) region of the centromere. This Schizosaccharomyces pombe (strain 972 / ATCC 24843) (Fission yeast) protein is Inner kinetochore subunit fta3 (fta3).